The following is a 365-amino-acid chain: 3-dehydroquinate synthase (365 aa).

Residues 106–110 (GVIGD), 130–131 (TT), lysine 142, lysine 151, and 169–172 (FFAT) contribute to the NAD(+) site. The Zn(2+) site is built by glutamate 184, histidine 247, and histidine 264.

The protein belongs to the sugar phosphate cyclases superfamily. Dehydroquinate synthase family. Requires Co(2+) as cofactor. Zn(2+) serves as cofactor. It depends on NAD(+) as a cofactor.

It localises to the cytoplasm. The catalysed reaction is 7-phospho-2-dehydro-3-deoxy-D-arabino-heptonate = 3-dehydroquinate + phosphate. It participates in metabolic intermediate biosynthesis; chorismate biosynthesis; chorismate from D-erythrose 4-phosphate and phosphoenolpyruvate: step 2/7. In terms of biological role, catalyzes the conversion of 3-deoxy-D-arabino-heptulosonate 7-phosphate (DAHP) to dehydroquinate (DHQ). This is 3-dehydroquinate synthase from Listeria welshimeri serovar 6b (strain ATCC 35897 / DSM 20650 / CCUG 15529 / CIP 8149 / NCTC 11857 / SLCC 5334 / V8).